A 494-amino-acid chain; its full sequence is Alpha-amylase-related protein (494 aa).

A signal peptide spans 1–20; that stretch reads MIKFALALTLCLAGASLSLA. Residue Gln21 is modified to Pyrrolidone carboxylic acid. A disulfide bridge links Cys48 with Cys104. Ca(2+) is bound by residues Asn118, Gln169, and Asp178. A disulfide bond links Cys157 and Cys171. Position 206 (Arg206) interacts with chloride. Asp208 acts as the Nucleophile in catalysis. Position 212 (His212) interacts with Ca(2+). The Proton donor role is filled by Glu245. 2 residues coordinate chloride: Asn308 and Arg343. Intrachain disulfides connect Cys376–Cys382, Cys418–Cys441, and Cys448–Cys460.

The protein belongs to the glycosyl hydrolase 13 family. In terms of assembly, monomer. Ca(2+) serves as cofactor. Requires chloride as cofactor.

The protein localises to the secreted. The catalysed reaction is Endohydrolysis of (1-&gt;4)-alpha-D-glucosidic linkages in polysaccharides containing three or more (1-&gt;4)-alpha-linked D-glucose units.. The sequence is that of Alpha-amylase-related protein (Amyrel) from Drosophila bakoue (Fruit fly).